The sequence spans 533 residues: Probable nucleolar protein 5-1 (533 aa).

The region spanning 280-398 (IAPNLTALVG…LEARLRTLEG (119 aa)) is the Nop domain. The interval 402-533 (GRLSGSAKGK…EKKKKKKTEV (132 aa)) is disordered. Residues 412 to 423 (PKIEVYDKDKKK) show a composition bias toward basic and acidic residues. Over residues 433–450 (KTYNTAADSLLQTPTVDS) the composition is skewed to polar residues. 2 stretches are compositionally biased toward basic and acidic residues: residues 474–489 (TEEP…KTEA) and 515–524 (MPAKKKEKSE).

It belongs to the NOP5/NOP56 family.

It is found in the nucleus. The protein resides in the nucleolus. Its function is as follows. Required for 60S ribosomal subunit biogenesis. The polypeptide is Probable nucleolar protein 5-1 (NOP5-1) (Arabidopsis thaliana (Mouse-ear cress)).